The sequence spans 326 residues: Protease inhibitor (326 aa).

A signal peptide spans 1 to 24 (MKTIRTGMMTLAALAVLGTNVVSA). Repeat copies occupy residues 177 to 208 (IILHVDKETKITTADGKELKPEDLQLGMEVEA) and 272 to 304 (VALIVGKDTKIVSAKDNKELAPEDLKAEMKVFA). The interval 177 to 304 (IILHVDKETK…DLKAEMKVFA (128 aa)) is 2 X 32 AA approximate repeats.

In terms of processing, proteolytically cleaved to yield at least three forms (BBRPI-A, -B, and -C).

It localises to the secreted. Functionally, shows inhibitory activity towards serine proteases, such as trypsin, chymotrypsin and subtilisin. May form a trypsin-inhibitor complex in a molar ratio of 1:1. The chain is Protease inhibitor from Brevibacillus choshinensis.